The chain runs to 301 residues: ATP synthase gamma chain (301 aa).

Belongs to the ATPase gamma chain family. F-type ATPases have 2 components, CF(1) - the catalytic core - and CF(0) - the membrane proton channel. CF(1) has five subunits: alpha(3), beta(3), gamma(1), delta(1), epsilon(1). CF(0) has three main subunits: a, b and c.

Its subcellular location is the cell inner membrane. Produces ATP from ADP in the presence of a proton gradient across the membrane. The gamma chain is believed to be important in regulating ATPase activity and the flow of protons through the CF(0) complex. The chain is ATP synthase gamma chain from Helicobacter pylori (strain ATCC 700392 / 26695) (Campylobacter pylori).